Here is a 432-residue protein sequence, read N- to C-terminus: Gamma-glutamyl phosphate reductase (432 aa).

Belongs to the gamma-glutamyl phosphate reductase family.

It is found in the cytoplasm. It carries out the reaction L-glutamate 5-semialdehyde + phosphate + NADP(+) = L-glutamyl 5-phosphate + NADPH + H(+). Its pathway is amino-acid biosynthesis; L-proline biosynthesis; L-glutamate 5-semialdehyde from L-glutamate: step 2/2. Functionally, catalyzes the NADPH-dependent reduction of L-glutamate 5-phosphate into L-glutamate 5-semialdehyde and phosphate. The product spontaneously undergoes cyclization to form 1-pyrroline-5-carboxylate. This chain is Gamma-glutamyl phosphate reductase, found in Brachyspira hyodysenteriae (strain ATCC 49526 / WA1).